The chain runs to 474 residues: Probable aspartate--tRNA ligase, cytoplasmic (474 aa).

Residue E203 participates in L-aspartate binding. The segment at 225–228 is aspartate; that stretch reads QLYK. R247 serves as a coordination point for L-aspartate. ATP contacts are provided by residues 247–249, 255–257, and E397; these read RAE and RYL. The L-aspartate site is built by S400 and R404. 445 to 448 is an ATP binding site; that stretch reads GLER.

It belongs to the class-II aminoacyl-tRNA synthetase family. Type 2 subfamily. Homodimer.

It is found in the cytoplasm. It carries out the reaction tRNA(Asp) + L-aspartate + ATP = L-aspartyl-tRNA(Asp) + AMP + diphosphate. This chain is Probable aspartate--tRNA ligase, cytoplasmic, found in Enterocytozoon bieneusi (strain H348) (Microsporidian parasite).